A 1659-amino-acid polypeptide reads, in one-letter code: Cortactin-binding protein 2 (1659 aa).

The interval 1-23 (MATDGASCEPDLSRAPEDAAGAA) is disordered. The stretch at 119 to 276 (RKMQERMSAQ…EQLKRGSDSK (158 aa)) forms a coiled coil. 2 disordered regions span residues 324–436 (LTMP…LHPG) and 450–474 (GNANDPDQNGNTTQSPPSRDVSPTS). Low complexity-rich tracts occupy residues 337–348 (ASANAKGSAAMA) and 381–392 (GPSTGLTPDPTS). The span at 405–418 (TAQTPGITPQNSQA) shows a compositional bias: polar residues. Arg494 carries the asymmetric dimethylarginine modification. Positions 495 to 612 (FTGPQAGAPP…SSPQLPPKPS (118 aa)) are disordered. Residues 579-589 (TVASPPSSLPQ) are compositionally biased toward polar residues. 5 ANK repeats span residues 705–735 (GRPTLLQQAAAQGNVTLLLMLLNEEGLDINY), 739–768 (DGHSALYSAAKNGHTDCVRLLLSAEAQVNA), 772–801 (NGFTPLCAAAAQGHFECVELLIAYDANINH), 805–834 (GGQTPLYLACKNGNKECIKLLLEAGTDRNV), and 838–867 (DGWTPVHAAVDTGNVDSLKLLMYHRVPAHG). Residues 869 to 893 (SFSEEESESGVFDLDGGGESPEGKS) form a disordered region. Residues 908-938 (EGWTAAHIAASKGFKNCLEILCRHGGLETER) form an ANK 6 repeat. Residues 1443–1478 (KKKGESGAWRKVNTSPRRKSGRFSLPTWNKPDLSTE) are disordered. A Phosphoserine modification is found at Ser1520. A disordered region spans residues 1613 to 1659 (RSKVTQCSQNTKRNSSSSNTRQIEINNNSKEENWNLHKNEHLEKPNK). Positions 1620 to 1634 (SQNTKRNSSSSNTRQ) are enriched in low complexity. Residues 1641-1659 (SKEENWNLHKNEHLEKPNK) show a composition bias toward basic and acidic residues.

As to quaternary structure, interacts with CTTN/cortactin SH3 domain. Interacts with STRN, STRN4/zinedin and MOB4/phocein; this interactions mediate the association with the STRIPAK core complex and may regulate dendritic spine distribution of the STRIPAK complex in hippocampal neurons. Activation of glutamate receptors weakens the interaction with STRN and STRN4.

The protein localises to the cytoplasm. Its subcellular location is the cell cortex. It localises to the cell projection. It is found in the dendritic spine. In terms of biological role, regulates the dendritic spine distribution of CTTN/cortactin in hippocampal neurons, and thus controls dendritic spinogenesis and dendritic spine maintenance. Associates with the striatin-interacting phosphatase and kinase (STRIPAK) core complex to regulate dendritic spine distribution of the STRIPAK complex in hippocampal neurons. The protein is Cortactin-binding protein 2 (CTTNBP2) of Saimiri boliviensis boliviensis (Bolivian squirrel monkey).